The following is a 357-amino-acid chain: MRKIIHCDCDCFYAAIEMRDDPRLVGRPLAVGGRPERRGVVATCNYEARKFGIHSAMPMAQAVKRCPDLLIVPPAMDKYRQVARQIFAIYQGYTPLVEPLSLDEAYLDVTDSPMLAGSGTRIAEDIRRRVREEIGITVSAGVAPNKFIAKIASDWNKPDGLFVVRPEQVDAFVAALPVERLFGVGKVTAAKLRRLGAQTCGDLRGWGADRLQQHFGSFGFRLHDLCRGIDHRQVQPSQIRKSVSVEETYATDLRTLDDCQRELTILVDQLAARVERARAGDMIHKTFVKLRFADFRGTTVECVYPQVALPVFNRLLAQGFERRRMPVRLLGVGVRLHETDAHARQQALFAEGPPPGA.

In terms of domain architecture, UmuC spans 4-185; the sequence is IIHCDCDCFY…LPVERLFGVG (182 aa). 2 residues coordinate Mg(2+): Asp-8 and Asp-103. Glu-104 is a catalytic residue.

Belongs to the DNA polymerase type-Y family. As to quaternary structure, monomer. Mg(2+) serves as cofactor.

The protein localises to the cytoplasm. The enzyme catalyses DNA(n) + a 2'-deoxyribonucleoside 5'-triphosphate = DNA(n+1) + diphosphate. In terms of biological role, poorly processive, error-prone DNA polymerase involved in untargeted mutagenesis. Copies undamaged DNA at stalled replication forks, which arise in vivo from mismatched or misaligned primer ends. These misaligned primers can be extended by PolIV. Exhibits no 3'-5' exonuclease (proofreading) activity. May be involved in translesional synthesis, in conjunction with the beta clamp from PolIII. The protein is DNA polymerase IV of Ralstonia nicotianae (strain ATCC BAA-1114 / GMI1000) (Ralstonia solanacearum).